The primary structure comprises 95 residues: uncharacterized protein (95 aa).

Functionally, the presence of the two linear plasmids, termed pGKL1 and pGKL2, in strains of Kluyveromyces lactis confers the killer phenotype to the host cell, by promoting the secretion of a toxin able to inhibit the growth of sensitive strains. This is an uncharacterized protein from Kluyveromyces lactis (strain ATCC 8585 / CBS 2359 / DSM 70799 / NBRC 1267 / NRRL Y-1140 / WM37) (Yeast).